Here is a 425-residue protein sequence, read N- to C-terminus: Proline--tRNA ligase (425 aa).

Belongs to the class-II aminoacyl-tRNA synthetase family. ProS type 2 subfamily. In terms of assembly, homodimer.

The protein localises to the cytoplasm. It catalyses the reaction tRNA(Pro) + L-proline + ATP = L-prolyl-tRNA(Pro) + AMP + diphosphate. Catalyzes the attachment of proline to tRNA(Pro) in a two-step reaction: proline is first activated by ATP to form Pro-AMP and then transferred to the acceptor end of tRNA(Pro). The polypeptide is Proline--tRNA ligase (Anaplasma marginale (strain St. Maries)).